We begin with the raw amino-acid sequence, 434 residues long: Citrate synthase (434 aa).

Active-site residues include histidine 310 and aspartate 368.

Belongs to the citrate synthase family.

The enzyme catalyses oxaloacetate + acetyl-CoA + H2O = citrate + CoA + H(+). It participates in carbohydrate metabolism; tricarboxylic acid cycle; isocitrate from oxaloacetate: step 1/2. This is Citrate synthase (gltA) from Bradyrhizobium diazoefficiens (strain JCM 10833 / BCRC 13528 / IAM 13628 / NBRC 14792 / USDA 110).